We begin with the raw amino-acid sequence, 720 residues long: Protein-glutamine gamma-glutamyltransferase 5 (720 aa).

Residue Ala-2 is modified to N-acetylalanine. Residues Cys-278, His-337, and Asp-360 contribute to the active site. The Ca(2+) site is built by Asn-400, Asp-402, Glu-448, and Glu-453. The interval 470 to 499 is disordered; that stretch reads HGSQRGAELQPSRPTSLSQDSPRSLHTPSL. The span at 481 to 496 shows a compositional bias: polar residues; the sequence is SRPTSLSQDSPRSLHT.

Belongs to the transglutaminase superfamily. Transglutaminase family. Requires Ca(2+) as cofactor. In terms of tissue distribution, expressed in foreskin keratinocytes.

The protein resides in the cytoplasm. It catalyses the reaction L-glutaminyl-[protein] + L-lysyl-[protein] = [protein]-L-lysyl-N(6)-5-L-glutamyl-[protein] + NH4(+). Functionally, catalyzes the cross-linking of proteins and the conjugation of polyamines to proteins. Contributes to the formation of the cornified cell envelope of keratinocytes. In Homo sapiens (Human), this protein is Protein-glutamine gamma-glutamyltransferase 5 (TGM5).